Consider the following 306-residue polypeptide: MPLLTPTSVVLGVLLSQFLNGYEWAVPWIFAFITFAGSLSANFQSLRHALSHPLPMILALFVLHIFMPLFAWGSGHLIFKGDPLTITGLTLAVVIPTGITSLIWAAMYKGNVGLTLSIILVDTVLSPLIVPLSLSLLAGAQVHMDVWGMMKGLIVMVVIPSFLGMLFNQMSSPERTAFVSSALSPFSKLCLMAVIAINSSAIAPYFKSIDLRFAGIAVTVFFIALTGYAAAWLIGKMMKRRQEEIVSLIFTGGMRNISAGAVLAVTFFPSQVAVPVVIGMLFQQILAALFGYMLNRFELKPMLQKA.

9 consecutive transmembrane segments (helical) span residues 13–33 (VLLSQFLNGYEWAVPWIFAFI), 53–73 (PLPMILALFVLHIFMPLFAWG), 86–106 (ITGLTLAVVIPTGITSLIWAA), 112–132 (VGLTLSIILVDTVLSPLIVPL), 147–167 (WGMMKGLIVMVVIPSFLGMLF), 177–197 (AFVSSALSPFSKLCLMAVIAI), 214–234 (AGIAVTVFFIALTGYAAAWLI), 246–268 (VSLIFTGGMRNISAGAVLAVTFF), and 272–294 (VAVPVVIGMLFQQILAALFGYML).

The protein localises to the cell membrane. This is an uncharacterized protein from Bacillus subtilis (strain 168).